A 193-amino-acid chain; its full sequence is Bcl-2-binding component 3, isoforms 1/2 (193 aa).

Disordered stretches follow at residues 1–28 and 71–138; these read MARA…FPLG and ALGG…REIG. A Phosphoserine modification is found at Ser10. Positions 71 to 82 are enriched in low complexity; it reads ALGGSRWPGGPR. A BH3 motif is present at residues 137–151; sequence IGAQLRRMADDLNAQ.

This sequence belongs to the Bcl-2 family. Interacts with MCL1 and BCL2A1. Interacts (via BH3 domain) with BCL2. Interacts with BCL2L1/BCL-XL. Interacts (via BH3 domain) with NOL3/ARC (via CARD domain); this interaction prevents BBC3 association with BCL2 and results in CASP8 activation. As to expression, ubiquitously expressed.

The protein resides in the mitochondrion. Its function is as follows. Essential mediator of p53/TP53-dependent and p53/TP53-independent apoptosis. Promotes partial unfolding of BCL2L1 and dissociation of BCL2L1 from p53/TP53, releasing the bound p53/TP53 to induce apoptosis. Regulates ER stress-induced neuronal apoptosis. The sequence is that of Bcl-2-binding component 3, isoforms 1/2 (BBC3) from Homo sapiens (Human).